The chain runs to 114 residues: Putative antiporter subunit mnhC2 (114 aa).

3 helical membrane passes run leucine 3–isoleucine 23, leucine 25–serine 45, and alanine 72–isoleucine 92.

The protein belongs to the CPA3 antiporters (TC 2.A.63) subunit C family. May form a heterooligomeric complex that consists of seven subunits: mnhA2, mnhB2, mnhC2, mnhD2, mnhE2, mnhF2 and mnhG2.

It localises to the cell membrane. The chain is Putative antiporter subunit mnhC2 (mnhC2) from Staphylococcus epidermidis (strain ATCC 12228 / FDA PCI 1200).